Reading from the N-terminus, the 500-residue chain is Probable cardiolipin synthase YwiE (500 aa).

3 consecutive transmembrane segments (helical) span residues 6 to 26, 31 to 51, and 59 to 79; these read LEFF…FFPV, FYGG…SLIL, and TLLW…FYLF. 2 PLD phosphodiesterase domains span residues 237-264 and 413-440; these read LNFR…GKEY and QKGF…DMRS. Residues histidine 242, lysine 244, aspartate 249, histidine 418, lysine 420, and aspartate 425 contribute to the active site.

This sequence belongs to the phospholipase D family. Cardiolipin synthase subfamily.

Its subcellular location is the cell membrane. The enzyme catalyses 2 a 1,2-diacyl-sn-glycero-3-phospho-(1'-sn-glycerol) = a cardiolipin + glycerol. Its function is as follows. Catalyzes the reversible phosphatidyl group transfer from one phosphatidylglycerol molecule to another to form cardiolipin (CL) (diphosphatidylglycerol) and glycerol. May have a role in the heat shock response since the level of the transcript of ywiE increases after a heat shock. In Bacillus subtilis (strain 168), this protein is Probable cardiolipin synthase YwiE (ywiE).